Consider the following 196-residue polypeptide: Probable peptidyl-prolyl cis-trans isomerase (196 aa).

A signal peptide spans 1–26 (MSFIRSALAAAAFVALSIGAVQTASA). The PPIase cyclophilin-type domain maps to 29–194 (PENTVILKLK…KIIKATIEAD (166 aa)).

The protein belongs to the cyclophilin-type PPIase family.

The protein localises to the periplasm. The enzyme catalyses [protein]-peptidylproline (omega=180) = [protein]-peptidylproline (omega=0). PPIases accelerate the folding of proteins. It catalyzes the cis-trans isomerization of proline imidic peptide bonds in oligopeptides. This chain is Probable peptidyl-prolyl cis-trans isomerase (ppi), found in Brucella melitensis biotype 1 (strain ATCC 23456 / CCUG 17765 / NCTC 10094 / 16M).